Consider the following 351-residue polypeptide: MDLVKLQKSLDNISFGILFATMLIYWLGAAFPRIPYLSILGSTGMAIANLCIATLLGARWLEASYFPISNLYESLFFLTWGITTIHLIAENMSGARLVGVFTSPIAMGISAFAALTLPSNMQISEPLVPALKSNWLMMHVSVMMLSYATLIVGALLAIAFLIITSGQKVELSGSSFGTRSSRNNHFVKYQKNWQLQKERPLLKEIKNNYKPFPQSTKNDHSQTSVLEITEVTQKVDPEIILSPERLNIAQILDNISYRIIGLGFPLLTIGIIAGAVWANEAWGSYWSWDPKETWALITWLVFAAYLHARITKGWQGRKPAILAATGFAVVWVCYLGVNLLGKGLHSYGWFL.

Helical transmembrane passes span 12–32, 37–57, 68–88, 97–117, 143–163, 259–279, 294–314, and 320–340; these read NISF…AAFP, LSIL…TLLG, ISNL…IHLI, LVGV…ALTL, MMLS…FLII, IIGL…VWAN, WALI…TKGW, and AILA…VNLL.

The protein belongs to the CcmF/CycK/Ccl1/NrfE/CcsA family. In terms of assembly, may interact with ccs1.

It localises to the cellular thylakoid membrane. Its function is as follows. Required during biogenesis of c-type cytochromes (cytochrome c6 and cytochrome f) at the step of heme attachment. The protein is Cytochrome c biogenesis protein CcsA of Trichodesmium erythraeum (strain IMS101).